The sequence spans 90 residues: Co-chaperonin GroES (90 aa).

The protein belongs to the GroES chaperonin family. Heptamer of 7 subunits arranged in a ring. Interacts with the chaperonin GroEL.

It is found in the cytoplasm. Together with the chaperonin GroEL, plays an essential role in assisting protein folding. The GroEL-GroES system forms a nano-cage that allows encapsulation of the non-native substrate proteins and provides a physical environment optimized to promote and accelerate protein folding. GroES binds to the apical surface of the GroEL ring, thereby capping the opening of the GroEL channel. The chain is Co-chaperonin GroES from Thermosipho africanus (strain TCF52B).